A 130-amino-acid chain; its full sequence is NADH-quinone oxidoreductase subunit A (130 aa).

3 helical membrane passes run 15-35 (AIHVALSAGIVAAIIVVATII), 67-87 (FLIAALFVIFDMEAAILFAWA), and 95-115 (WVGLIEAAIFIGVLLLALIYL).

It belongs to the complex I subunit 3 family. As to quaternary structure, NDH-1 is composed of 14 different subunits. Subunits NuoA, H, J, K, L, M, N constitute the membrane sector of the complex.

It localises to the cell inner membrane. It catalyses the reaction a quinone + NADH + 5 H(+)(in) = a quinol + NAD(+) + 4 H(+)(out). Functionally, NDH-1 shuttles electrons from NADH, via FMN and iron-sulfur (Fe-S) centers, to quinones in the respiratory chain. The immediate electron acceptor for the enzyme in this species is believed to be ubiquinone. Couples the redox reaction to proton translocation (for every two electrons transferred, four hydrogen ions are translocated across the cytoplasmic membrane), and thus conserves the redox energy in a proton gradient. This is NADH-quinone oxidoreductase subunit A from Rhodopseudomonas palustris (strain BisA53).